The chain runs to 379 residues: Succinate--CoA ligase [ADP-forming] subunit beta (379 aa).

Positions 9–235 constitute an ATP-grasp domain; the sequence is KEIAKNNGIP…GRELSEMEAI (227 aa). ATP is bound by residues lysine 45, glutamate 91, isoleucine 94, and glutamate 99. Residues asparagine 191 and aspartate 205 each contribute to the Mg(2+) site. Substrate contacts are provided by residues asparagine 255 and 312–314; that span reads GIT.

This sequence belongs to the succinate/malate CoA ligase beta subunit family. As to quaternary structure, heterotetramer of two alpha and two beta subunits. It depends on Mg(2+) as a cofactor.

The catalysed reaction is succinate + ATP + CoA = succinyl-CoA + ADP + phosphate. It carries out the reaction GTP + succinate + CoA = succinyl-CoA + GDP + phosphate. The protein operates within carbohydrate metabolism; tricarboxylic acid cycle; succinate from succinyl-CoA (ligase route): step 1/1. Functionally, succinyl-CoA synthetase functions in the citric acid cycle (TCA), coupling the hydrolysis of succinyl-CoA to the synthesis of either ATP or GTP and thus represents the only step of substrate-level phosphorylation in the TCA. The beta subunit provides nucleotide specificity of the enzyme and binds the substrate succinate, while the binding sites for coenzyme A and phosphate are found in the alpha subunit. This chain is Succinate--CoA ligase [ADP-forming] subunit beta, found in Staphylothermus marinus (strain ATCC 43588 / DSM 3639 / JCM 9404 / F1).